The following is a 262-amino-acid chain: Small ribosomal subunit protein uS2 (262 aa).

The segment at 224–262 (GKQGQDDAQQETADDNAANETVSEDSLKNLKNSVEGKED) is disordered.

It belongs to the universal ribosomal protein uS2 family.

The chain is Small ribosomal subunit protein uS2 from Limosilactobacillus reuteri (strain DSM 20016) (Lactobacillus reuteri).